Consider the following 390-residue polypeptide: Lipid-A-disaccharide synthase (390 aa).

This sequence belongs to the LpxB family.

The enzyme catalyses a lipid X + a UDP-2-N,3-O-bis[(3R)-3-hydroxyacyl]-alpha-D-glucosamine = a lipid A disaccharide + UDP + H(+). The protein operates within bacterial outer membrane biogenesis; LPS lipid A biosynthesis. Functionally, condensation of UDP-2,3-diacylglucosamine and 2,3-diacylglucosamine-1-phosphate to form lipid A disaccharide, a precursor of lipid A, a phosphorylated glycolipid that anchors the lipopolysaccharide to the outer membrane of the cell. In Haemophilus ducreyi (strain 35000HP / ATCC 700724), this protein is Lipid-A-disaccharide synthase.